Reading from the N-terminus, the 387-residue chain is 3-ketoacyl-CoA thiolase (387 aa).

The active-site Acyl-thioester intermediate is Cys-91. Active-site proton acceptor residues include His-343 and Cys-373.

Belongs to the thiolase-like superfamily. Thiolase family. As to quaternary structure, heterotetramer of two alpha chains (FadB) and two beta chains (FadA).

The protein resides in the cytoplasm. The catalysed reaction is an acyl-CoA + acetyl-CoA = a 3-oxoacyl-CoA + CoA. It participates in lipid metabolism; fatty acid beta-oxidation. Functionally, catalyzes the final step of fatty acid oxidation in which acetyl-CoA is released and the CoA ester of a fatty acid two carbons shorter is formed. The chain is 3-ketoacyl-CoA thiolase from Yersinia pseudotuberculosis serotype O:1b (strain IP 31758).